The primary structure comprises 268 residues: Phosphatidylglycerol--prolipoprotein diacylglyceryl transferase (268 aa).

Helical transmembrane passes span 25-45, 57-77, and 93-113; these read WYGVFFALSFLCGLYLMTKVF, YLFYYMIAGTVIGARLGHCFF, and VWHGGLASHGGVLGILTAVYF. Arginine 142 serves as a coordination point for a 1,2-diacyl-sn-glycero-3-phospho-(1'-sn-glycerol). 4 helical membrane passes run 151 to 171, 175 to 195, 204 to 224, and 236 to 256; these read IIGIPTDVSWAFIFARVDLLP, VQLYESIVYFLIFGFLMLAYW, GLLLGTILTSVFSARFLLEFF, and PLSVGQWLSIPAVIIGVLLIF.

Belongs to the Lgt family.

It localises to the cell inner membrane. The enzyme catalyses L-cysteinyl-[prolipoprotein] + a 1,2-diacyl-sn-glycero-3-phospho-(1'-sn-glycerol) = an S-1,2-diacyl-sn-glyceryl-L-cysteinyl-[prolipoprotein] + sn-glycerol 1-phosphate + H(+). Its pathway is protein modification; lipoprotein biosynthesis (diacylglyceryl transfer). Catalyzes the transfer of the diacylglyceryl group from phosphatidylglycerol to the sulfhydryl group of the N-terminal cysteine of a prolipoprotein, the first step in the formation of mature lipoproteins. This chain is Phosphatidylglycerol--prolipoprotein diacylglyceryl transferase, found in Chloroherpeton thalassium (strain ATCC 35110 / GB-78).